A 541-amino-acid polypeptide reads, in one-letter code: Zinc finger protein 513 (541 aa).

Positions 1–120 (MPRRKQSHPQ…ARGERPGPAC (120 aa)) are disordered. Positions 44–55 (LEFEEEEEEEEG) are enriched in acidic residues. 2 positions are modified to phosphoserine: Ser-85 and Ser-96. Over residues 103 to 115 (EPARGPGEARGER) the composition is skewed to basic and acidic residues. 8 consecutive C2H2-type zinc fingers follow at residues 150–172 (YSCR…MQTH), 178–200 (FRCG…TRTH), 206–228 (YRCP…QRTH), 360–382 (FACS…MKTH), 388–410 (FRCA…QRVH), 416–438 (YKCP…GRIH), 444–466 (FRCS…MLRH), and 472–494 (FRCA…QKVH). The segment at 492–541 (KVHGHGGAGGPGLSAPEGWAPPHSPPSVLSTRGSAALGATGSRALHTDSP) is disordered.

Belongs to the krueppel C2H2-type zinc-finger protein family. Binds DNA. Can associate with the proximal promoter regions of PAX6 and SP4, and their known targets including ARR3, RHO, OPN1MW2 and OPN1SW.

The protein resides in the nucleus. Its function is as follows. Transcriptional regulator that plays a role in retinal development and maintenance. The chain is Zinc finger protein 513 (Znf513) from Rattus norvegicus (Rat).